A 604-amino-acid polypeptide reads, in one-letter code: Elongation factor 4 (604 aa).

The tr-type G domain occupies 10-191; sequence KNIRNFSIIA…KIITTIPAPS (182 aa). Residues 22–27 and 138–141 each bind GTP; these read DHGKST and NKID.

Belongs to the TRAFAC class translation factor GTPase superfamily. Classic translation factor GTPase family. LepA subfamily.

The protein localises to the cell inner membrane. It carries out the reaction GTP + H2O = GDP + phosphate + H(+). Functionally, required for accurate and efficient protein synthesis under certain stress conditions. May act as a fidelity factor of the translation reaction, by catalyzing a one-codon backward translocation of tRNAs on improperly translocated ribosomes. Back-translocation proceeds from a post-translocation (POST) complex to a pre-translocation (PRE) complex, thus giving elongation factor G a second chance to translocate the tRNAs correctly. Binds to ribosomes in a GTP-dependent manner. In Helicobacter acinonychis (strain Sheeba), this protein is Elongation factor 4.